The following is a 71-amino-acid chain: MLQKHNKVKQTSVVRLMKYRGGHFGGGGLSTAIYSIFAFFSIPLWEKFMTFYLELFSILNNLVTSISKGIL.

Residues 24-44 traverse the membrane as a helical segment; that stretch reads FGGGGLSTAIYSIFAFFSIPL.

It is found in the membrane. This is an uncharacterized protein from Schizosaccharomyces pombe (strain 972 / ATCC 24843) (Fission yeast).